The primary structure comprises 773 residues: Preaspterpenacid I synthase sttA (773 aa).

The tract at residues Ile-4–Thr-359 is sesterterpenoid synthase. Mg(2+) is bound at residue Asp-105. Asp-105 lines the substrate pocket. The tract at residues Arg-211–Glu-214 is substrate. Asn-255 contributes to the substrate binding site. 2 substrate regions span residues Ser-259–Glu-263 and Arg-350–Tyr-351. Positions Ala-360 to Lys-769 are geranylfarnesyl diphosphate synthase. The segment at Ala-423 to Gly-447 is disordered. A compositionally biased stretch (polar residues) spans Asn-431–Gly-447. Isopentenyl diphosphate is bound by residues Lys-493, Arg-496, and His-525. Residues Asp-532 and Asp-536 each coordinate Mg(2+). Arg-541 contributes to the dimethylallyl diphosphate binding site. Residue Arg-542 coordinates isopentenyl diphosphate. Residues Lys-614, Thr-615, Gln-652, Asn-659, and Lys-669 each contribute to the dimethylallyl diphosphate site.

This sequence in the N-terminal section; belongs to the terpene synthase family. It in the C-terminal section; belongs to the FPP/GGPP synthase family.

The enzyme catalyses 4 isopentenyl diphosphate + dimethylallyl diphosphate = (2E,6E,10E,14E)-geranylfarnesyl diphosphate + 4 diphosphate. The catalysed reaction is (2E,6E,10E,14E)-geranylfarnesyl diphosphate + H2O = preaspterpenacid acid I + diphosphate. It participates in secondary metabolite biosynthesis; terpenoid biosynthesis. Functionally, sesterterpenoid synthase; part of the gene cluster that mediates the biosynthesis of aspterpenacids. Performs both prenyl transferase and terpene cyclase activity, converting isopentenyl diphosphate and dimethylallyl diphosphate into geranylfarnesyl diphosphate (GFPP) and then converting GFPP into preaspterpenacid I. C22-oxidative modification of preaspterpenacid I by the cytochrome P450 monooxygenase sttB then leads to preaspterpenacid II. It has still to be determined how preaspterpenacid II is further modified to produce aspterpenacids. The sequence is that of Preaspterpenacid I synthase sttA from Aspergillus terreus (strain NIH 2624 / FGSC A1156).